A 508-amino-acid polypeptide reads, in one-letter code: Photosystem II CP47 reaction center protein (508 aa).

The next 6 membrane-spanning stretches (helical) occupy residues 21 to 36, 101 to 115, 140 to 156, 203 to 218, 237 to 252, and 457 to 472; these read SVHI…WAGS, IVFS…IWHW, GIHL…FGAF, IAAG…FHLS, VLSS…AFVV, and SFAL…HGAR.

The protein belongs to the PsbB/PsbC family. PsbB subfamily. In terms of assembly, PSII is composed of 1 copy each of membrane proteins PsbA, PsbB, PsbC, PsbD, PsbE, PsbF, PsbH, PsbI, PsbJ, PsbK, PsbL, PsbM, PsbT, PsbX, PsbY, PsbZ, Psb30/Ycf12, at least 3 peripheral proteins of the oxygen-evolving complex and a large number of cofactors. It forms dimeric complexes. Binds multiple chlorophylls. PSII binds additional chlorophylls, carotenoids and specific lipids. serves as cofactor.

It is found in the plastid. It localises to the chloroplast thylakoid membrane. Functionally, one of the components of the core complex of photosystem II (PSII). It binds chlorophyll and helps catalyze the primary light-induced photochemical processes of PSII. PSII is a light-driven water:plastoquinone oxidoreductase, using light energy to abstract electrons from H(2)O, generating O(2) and a proton gradient subsequently used for ATP formation. This chain is Photosystem II CP47 reaction center protein, found in Platanus occidentalis (Sycamore).